The chain runs to 216 residues: MSDKVINPQVAWAQRSSTTDPERNYVLITVSIADCDAPELTIKPSYIELKAQSKPHVGDENVHHYQLHIDLYKEIIPEKTMHKVANGQHYFLKLYKKDLESEYWPRLTKEKVKYPYIKTDFDKWVDEDEQDEVEAEGNDAAQGMDFSQMMGGAGGAGGAGGMDFSQMMGGAGGAGSPDMAQLQQLLAQSGGNLDMGDFKENDEEDEEEEIEPEVKA.

S2 bears the N-acetylserine mark. Residues 5–108 form the CS domain; that stretch reads VINPQVAWAQ…LESEYWPRLT (104 aa). 2 repeats span residues 141-156 and 160-174; these read AQGM…AGGA and GGMD…AGGA. Residues 169–216 form a disordered region; sequence GGAGGAGSPDMAQLQQLLAQSGGNLDMGDFKENDEEDEEEEIEPEVKA. Acidic residues predominate over residues 200 to 216; the sequence is ENDEEDEEEEIEPEVKA.

The protein belongs to the p23/wos2 family. As to quaternary structure, interacts with HSP82.

Functionally, acts as a co-chaperone. The protein is Co-chaperone protein SBA1 (SBA1) of Saccharomyces cerevisiae (strain ATCC 204508 / S288c) (Baker's yeast).